Here is a 363-residue protein sequence, read N- to C-terminus: uncharacterized protein (363 aa).

7 helical membrane passes run 20 to 40, 63 to 83, 101 to 121, 141 to 161, 186 to 206, 227 to 247, and 268 to 288; these read WFFTLVEMILAVGGLIMNTNI, INFAILSGFQLARNFFLFLVM, FPLIFCYIHCAASFFLLGVQS, SVWQSTIAAVCVALSLLFTAF, FSLLTLLILLHATGLIFIMLA, IFKYETLAWQISLFISGCVVL, and FLIVPLLISFMHPLYLIWYVL. The disordered stretch occupies residues 329–363; it reads PRADLTPNDTLHMESKKKPLSQSPRVVIEEEDVAE.

The protein resides in the membrane. This is an uncharacterized protein from Caenorhabditis elegans.